Here is an 860-residue protein sequence, read N- to C-terminus: GPI ethanolamine phosphate transferase 2 (860 aa).

N-linked (GlcNAc...) asparagine glycosylation is found at asparagine 123 and asparagine 180. Helical transmembrane passes span 408–428 (LGGI…FSAL), 438–458 (LYLI…TVEE), 459–479 (EHQI…ISGS), 487–506 (FNWM…NQTG), 524–544 (NHPV…NKVW), 555–575 (LAFL…ITQA), 576–596 (WEAG…PGTL), and 639–659 (AFLT…LFMV). N-linked (GlcNAc...) asparagine glycosylation occurs at asparagine 672. Helical transmembrane passes span 692–712 (LVLV…FSMG), 736–756 (FVGV…STAG), 795–815 (VYVV…TCFF), and 834–854 (FVWT…IFVV).

The protein belongs to the PIGG/PIGN/PIGO family. PIGG subfamily.

The protein resides in the endoplasmic reticulum membrane. Its pathway is glycolipid biosynthesis; glycosylphosphatidylinositol-anchor biosynthesis. Ethanolamine phosphate transferase involved in glycosylphosphatidylinositol-anchor biosynthesis. Transfers ethanolamine phosphate to the GPI second mannose. In Yarrowia lipolytica (strain CLIB 122 / E 150) (Yeast), this protein is GPI ethanolamine phosphate transferase 2 (LAS21).